Here is a 382-residue protein sequence, read N- to C-terminus: MSLKEKTQSLFANAFGYPATHTIQAPGRVNLIGEHTDYNDGFVLPCAIDYQTVISCAPRDDRKVRVMAADYENQLDEFSLNAPIVAHENYQWANYVRGVVKHLQLRNNSFGGVDMVISGNVPQGAGLSSSASLEVAVGTVLQQLYHLPLDGAQIALNGQEAENQFVGCNCGIMDQLISALGKKDHALLIDCRSLGTKAVSMPKGVAVVIINSNFKRTLVGSEYNTRREQCETGARFFQQPALRDVTIEEFNAVAHELDPIVAKRVRHILTENARTVEAASALEQGDLKRMGELMAESHASMRDDFEITVPQIDTLVEIVKAVIGDKGGVRMTGGGFGGCIVALIPEELVPAVQQAVAEQYEAKTGIKETFYVCKPSQGAGQC.

A substrate-binding site is contributed by 34 to 37; that stretch reads EHTD. ATP is bound at residue 124–130; that stretch reads GAGLSSS. Mg(2+) contacts are provided by serine 130 and glutamate 162. Aspartate 174 serves as the catalytic Proton acceptor. A substrate-binding site is contributed by tyrosine 223.

This sequence belongs to the GHMP kinase family. GalK subfamily.

The protein localises to the cytoplasm. It catalyses the reaction alpha-D-galactose + ATP = alpha-D-galactose 1-phosphate + ADP + H(+). It participates in carbohydrate metabolism; galactose metabolism. In terms of biological role, catalyzes the transfer of the gamma-phosphate of ATP to D-galactose to form alpha-D-galactose-1-phosphate (Gal-1-P). This Shigella flexneri protein is Galactokinase.